We begin with the raw amino-acid sequence, 190 residues long: Nucleoside triphosphate pyrophosphatase (190 aa).

The Proton acceptor role is filled by Asp-69.

This sequence belongs to the Maf family. The cofactor is a divalent metal cation.

It localises to the cytoplasm. The catalysed reaction is a ribonucleoside 5'-triphosphate + H2O = a ribonucleoside 5'-phosphate + diphosphate + H(+). It catalyses the reaction a 2'-deoxyribonucleoside 5'-triphosphate + H2O = a 2'-deoxyribonucleoside 5'-phosphate + diphosphate + H(+). Functionally, nucleoside triphosphate pyrophosphatase. May have a dual role in cell division arrest and in preventing the incorporation of modified nucleotides into cellular nucleic acids. This chain is Nucleoside triphosphate pyrophosphatase, found in Helicobacter pylori (strain Shi470).